Reading from the N-terminus, the 100-residue chain is Small ribosomal subunit protein uS14c (100 aa).

This sequence belongs to the universal ribosomal protein uS14 family. In terms of assembly, part of the 30S ribosomal subunit.

It is found in the plastid. The protein resides in the chloroplast. Binds 16S rRNA, required for the assembly of 30S particles. This chain is Small ribosomal subunit protein uS14c, found in Fagopyrum esculentum subsp. ancestrale (Wild buckwheat).